Consider the following 227-residue polypeptide: NAD(P)H-hydrate epimerase (227 aa).

One can recognise a YjeF N-terminal domain in the interval 12 to 221 (SRLVDELAIA…DIGVPRALLE (210 aa)). Residue 59 to 63 (NNGGD) participates in (6S)-NADPHX binding. 2 residues coordinate K(+): Asn-60 and Asp-131. (6S)-NADPHX contacts are provided by residues 135–141 (GTGATGE) and Asp-164. Position 167 (Thr-167) interacts with K(+).

Belongs to the NnrE/AIBP family. K(+) serves as cofactor.

The enzyme catalyses (6R)-NADHX = (6S)-NADHX. It carries out the reaction (6R)-NADPHX = (6S)-NADPHX. Catalyzes the epimerization of the S- and R-forms of NAD(P)HX, a damaged form of NAD(P)H that is a result of enzymatic or heat-dependent hydration. This is a prerequisite for the S-specific NAD(P)H-hydrate dehydratase to allow the repair of both epimers of NAD(P)HX. The chain is NAD(P)H-hydrate epimerase from Pirellula staleyi (strain ATCC 27377 / DSM 6068 / ICPB 4128) (Pirella staleyi).